Consider the following 248-residue polypeptide: Putative insertion sequence ATP-binding protein y4uH (248 aa).

106–113 (GPTGIGKS) serves as a coordination point for ATP.

This sequence belongs to the IS21/IS1162 putative ATP-binding protein family.

This is Putative insertion sequence ATP-binding protein y4uH from Sinorhizobium fredii (strain NBRC 101917 / NGR234).